Consider the following 308-residue polypeptide: PHO85 cyclin-2 (308 aa).

The Cyclin N-terminal domain occupies Glu18 to Thr146. A disordered region spans residues Ser248–Lys270. Residues Asp255–Arg264 are compositionally biased toward basic and acidic residues.

It belongs to the cyclin family. PCL1,2 subfamily. As to quaternary structure, forms a cyclin-CDK complex with PHO85. Interacts with RVS167.

It localises to the cytoplasm. It is found in the nucleus. Its function is as follows. G1/S-specific cyclin partner of the cyclin-dependent kinase (CDK) PHO85. Essential for the control of the cell cycle at the G1/S (start) transition. Together with cyclin PCL1, positively controls degradation of sphingoid long chain base kinase LCB4. The PCL2-PHO85 cyclin-CDK holoenzyme phosphorylates LCB4, which is required for its ubiquitination and degradation. PCL2-PHO85 also phosphorylates RVS167, linking cyclin-CDK activity with organization of the actin cytoskeleton. This chain is PHO85 cyclin-2 (PCL2), found in Saccharomyces cerevisiae (strain ATCC 204508 / S288c) (Baker's yeast).